Reading from the N-terminus, the 358-residue chain is Peptide chain release factor 1 (358 aa).

Glutamine 233 is subject to N5-methylglutamine.

It belongs to the prokaryotic/mitochondrial release factor family. In terms of processing, methylated by PrmC. Methylation increases the termination efficiency of RF1.

The protein resides in the cytoplasm. In terms of biological role, peptide chain release factor 1 directs the termination of translation in response to the peptide chain termination codons UAG and UAA. The protein is Peptide chain release factor 1 of Clostridium botulinum (strain ATCC 19397 / Type A).